Consider the following 274-residue polypeptide: Large ribosomal subunit protein uL2 (274 aa).

A disordered region spans residues 224 to 254; that stretch reads AMNPVDHPHGGGEGRTGEGQAPVSPWNTLTK. Positions 229 to 239 are enriched in basic and acidic residues; that stretch reads DHPHGGGEGRT.

This sequence belongs to the universal ribosomal protein uL2 family. In terms of assembly, part of the 50S ribosomal subunit. Forms a bridge to the 30S subunit in the 70S ribosome.

Functionally, one of the primary rRNA binding proteins. Required for association of the 30S and 50S subunits to form the 70S ribosome, for tRNA binding and peptide bond formation. It has been suggested to have peptidyltransferase activity; this is somewhat controversial. Makes several contacts with the 16S rRNA in the 70S ribosome. The protein is Large ribosomal subunit protein uL2 of Leptothrix cholodnii (strain ATCC 51168 / LMG 8142 / SP-6) (Leptothrix discophora (strain SP-6)).